Reading from the N-terminus, the 298-residue chain is Craniofacial development protein 1 (298 aa).

Composition is skewed to acidic residues over residues 1 to 18, 25 to 43, and 70 to 80; these read MEEF…DEDY, YSED…DGEE, and LEEEGEEDANE. Disordered stretches follow at residues 1–158 and 191–223; these read MEEF…KPQE and FFKQ…SSGM. A phosphoserine mark is found at Ser82, Ser85, and Ser86. The span at 98–112 shows a compositional bias: basic and acidic residues; the sequence is KGIESEDARKKKEDE. Ser116 bears the Phosphoserine mark. Basic and acidic residues-rich tracts occupy residues 148 to 158 and 191 to 200; these read VKAEKLEKPQE and FFKQNEKEKP. Residue Lys149 forms a Glycyl lysine isopeptide (Lys-Gly) (interchain with G-Cter in SUMO2) linkage. The hydrophilic stretch occupies residues 177 to 216; that stretch reads VIKEVDATSKEAKSFFKQNEKEKPQSNISSSVPSLSAGSG. The span at 205–217 shows a compositional bias: low complexity; that stretch reads SSSVPSLSAGSGL. The residue at position 215 (Ser215) is a Phosphoserine. Residues 217-298 form the BCNT-C domain; that stretch reads LKRSSGMSSL…RDLRLSQMKP (82 aa). Lys218 bears the N6-methyllysine mark. Ser249 carries the phosphoserine modification.

It localises to the chromosome. The protein localises to the centromere. It is found in the kinetochore. Its function is as follows. May play a role during embryogenesis. In Muntiacus reevesi (Reeves' muntjac), this protein is Craniofacial development protein 1 (CFDP1).